Here is a 255-residue protein sequence, read N- to C-terminus: Triosephosphate isomerase (255 aa).

9–11 is a substrate binding site; it reads NWK. Histidine 95 functions as the Electrophile in the catalytic mechanism. The active-site Proton acceptor is the glutamate 167. Residues glycine 173, serine 212, and 233–234 contribute to the substrate site; that span reads GG.

It belongs to the triosephosphate isomerase family. Homodimer.

The protein localises to the cytoplasm. The enzyme catalyses D-glyceraldehyde 3-phosphate = dihydroxyacetone phosphate. The protein operates within carbohydrate biosynthesis; gluconeogenesis. It functions in the pathway carbohydrate degradation; glycolysis; D-glyceraldehyde 3-phosphate from glycerone phosphate: step 1/1. In terms of biological role, involved in the gluconeogenesis. Catalyzes stereospecifically the conversion of dihydroxyacetone phosphate (DHAP) to D-glyceraldehyde-3-phosphate (G3P). The sequence is that of Triosephosphate isomerase from Photorhabdus laumondii subsp. laumondii (strain DSM 15139 / CIP 105565 / TT01) (Photorhabdus luminescens subsp. laumondii).